The chain runs to 293 residues: MSGNNMLKIGIPKGSLEEATVNLFARSGWKIRKHHRNYFPEINDPELTARLCRVQEIPRYLEDGVLDVGLTGKDWLLETGADVVTVSDLVYSKVSNRPARWVLAVAGDSPYVRPEDLAGCTIATELLGVTRRYFEDAGIPVKVQYSWGATEAKVVEGLADAIVEVTETGTTIKAHGLRIIAEVLLTNTVLIAGKAAWADPWKRAKIEQIDLLLQGALRADSLVGLKMNVPAHNLDAVLDQLPSLNSPTVAGLRDSTWYAVEIVVENDLVRDLIPRLRAAGAEGIIEYSLNKVI.

The protein belongs to the ATP phosphoribosyltransferase family. Long subfamily. Requires Mg(2+) as cofactor.

It is found in the cytoplasm. The enzyme catalyses 1-(5-phospho-beta-D-ribosyl)-ATP + diphosphate = 5-phospho-alpha-D-ribose 1-diphosphate + ATP. The protein operates within amino-acid biosynthesis; L-histidine biosynthesis; L-histidine from 5-phospho-alpha-D-ribose 1-diphosphate: step 1/9. Feedback inhibited by histidine. In terms of biological role, catalyzes the condensation of ATP and 5-phosphoribose 1-diphosphate to form N'-(5'-phosphoribosyl)-ATP (PR-ATP). Has a crucial role in the pathway because the rate of histidine biosynthesis seems to be controlled primarily by regulation of HisG enzymatic activity. In Nitratidesulfovibrio vulgaris (strain DSM 19637 / Miyazaki F) (Desulfovibrio vulgaris), this protein is ATP phosphoribosyltransferase.